Here is a 170-residue protein sequence, read N- to C-terminus: Lipoprotein signal peptidase (170 aa).

Helical transmembrane passes span 9–29 (FNIF…KYLV), 72–92 (IFFI…ALKE), and 95–117 (CITR…DRLF). Residues Asp-124 and Asp-146 contribute to the active site. The chain crosses the membrane as a helical span at residues 143–163 (NFADSYVVIGMILFLVYDFFI).

This sequence belongs to the peptidase A8 family.

Its subcellular location is the cell inner membrane. It carries out the reaction Release of signal peptides from bacterial membrane prolipoproteins. Hydrolyzes -Xaa-Yaa-Zaa-|-(S,diacylglyceryl)Cys-, in which Xaa is hydrophobic (preferably Leu), and Yaa (Ala or Ser) and Zaa (Gly or Ala) have small, neutral side chains.. It participates in protein modification; lipoprotein biosynthesis (signal peptide cleavage). Its function is as follows. This protein specifically catalyzes the removal of signal peptides from prolipoproteins. This chain is Lipoprotein signal peptidase, found in Borrelia garinii subsp. bavariensis (strain ATCC BAA-2496 / DSM 23469 / PBi) (Borreliella bavariensis).